Consider the following 301-residue polypeptide: Acetylglutamate kinase (301 aa).

Substrate-binding positions include 72–73 (GG), Arg94, and Asn199.

Belongs to the acetylglutamate kinase family. ArgB subfamily.

It is found in the cytoplasm. The catalysed reaction is N-acetyl-L-glutamate + ATP = N-acetyl-L-glutamyl 5-phosphate + ADP. The protein operates within amino-acid biosynthesis; L-arginine biosynthesis; N(2)-acetyl-L-ornithine from L-glutamate: step 2/4. Catalyzes the ATP-dependent phosphorylation of N-acetyl-L-glutamate. In Bartonella bacilliformis (strain ATCC 35685 / KC583 / Herrer 020/F12,63), this protein is Acetylglutamate kinase.